Consider the following 788-residue polypeptide: Protein translocase subunit SecA 2 (788 aa).

ATP is bound by residues glutamine 86, 104 to 108 (GEGKT), and aspartate 493.

This sequence belongs to the SecA family. As to quaternary structure, monomer and homodimer. Part of the essential Sec protein translocation apparatus which comprises SecA, SecYEG and auxiliary proteins SecDF. Other proteins may also be involved.

The protein resides in the cell membrane. It localises to the cytoplasm. It carries out the reaction ATP + H2O + cellular proteinSide 1 = ADP + phosphate + cellular proteinSide 2.. Its function is as follows. Part of the Sec protein translocase complex. Interacts with the SecYEG preprotein conducting channel. Has a central role in coupling the hydrolysis of ATP to the transfer of proteins into and across the cell membrane, serving as an ATP-driven molecular motor driving the stepwise translocation of polypeptide chains across the membrane. This Geobacillus thermodenitrificans (strain NG80-2) protein is Protein translocase subunit SecA 2.